Reading from the N-terminus, the 76-residue chain is Omega-conotoxin-like TxMKLT1-0141 (76 aa).

A signal peptide spans 1-22 (MKLTCMMIVAVLFLTAWTFATA). Positions 23 to 50 (DDSSNGLENLFPKAHHEMKNPEASKLNE) are excised as a propeptide. Disulfide bonds link C52–C67, C59–C70, and C66–C75.

This sequence belongs to the conotoxin O1 superfamily. In terms of tissue distribution, expressed by the venom duct.

It is found in the secreted. Its function is as follows. Omega-conotoxins act at presynaptic membranes, they bind and block voltage-gated calcium channels (Cav). This Conus textile (Cloth-of-gold cone) protein is Omega-conotoxin-like TxMKLT1-0141.